Reading from the N-terminus, the 346-residue chain is Phenylalanine--tRNA ligase alpha subunit (346 aa).

E261 contacts Mg(2+).

The protein belongs to the class-II aminoacyl-tRNA synthetase family. Phe-tRNA synthetase alpha subunit type 1 subfamily. As to quaternary structure, tetramer of two alpha and two beta subunits. The cofactor is Mg(2+).

Its subcellular location is the cytoplasm. It catalyses the reaction tRNA(Phe) + L-phenylalanine + ATP = L-phenylalanyl-tRNA(Phe) + AMP + diphosphate + H(+). This is Phenylalanine--tRNA ligase alpha subunit from Streptococcus agalactiae serotype III (strain NEM316).